A 260-amino-acid polypeptide reads, in one-letter code: Small ribosomal subunit protein uS2 (260 aa).

The protein belongs to the universal ribosomal protein uS2 family.

This Roseobacter denitrificans (strain ATCC 33942 / OCh 114) (Erythrobacter sp. (strain OCh 114)) protein is Small ribosomal subunit protein uS2.